The sequence spans 905 residues: MSEKGETLIEDTAEIEFEQTVDKTQQWGRLKNAAAFSLFRDLHMNESLQRKHARSDYKVYDLNNRVIFHVINTTAMPITKDGPFCLKVMNKDKKSVAKFLRNEPKRSYKQTGLASLFGCCSDTEDTMEVLDDNGLIIATSFLHHDQFRGILITMKDPAGKVLIGIQASRDQKDVFAVSGPDNRYLGEIRQKIISSGNSTDNYKGVACWFSTEVSLNVKVFFMAAAFLIEIDYFSETKSRQAPFRTPEADYLNPIIKTPPHNERVPKMKTNISKTRKKKGKVSDASKDSRPSETKKETLMMPEIHHTKHFDSIGGEEQAFAKKEKVEEFKPTEAVKEEVDVNGMSRDQFRNAAKKVVDYLMKQDESIRAARCSPALKPGYLKALLPPKAPQKAEDIDDILEDYHKLIVPGLSHSSHPNFHSFYPAGNSFHCLLADLLGGHIGDAGFYWTSNPALTELEVLMMDWLGEMMALPKEFLLFPEASRGGGCMQRSDTESNFLVLVAARTDMIRRMKQRDKRLRSSDILARLVAYTSSDARRSIKMKMAAEVAMVKMRVLPTDQNFILRGDTLHAAIMADIERGLIPFFVGANFGTSGPCSFDHLHELGPVCREHGTWLHVDAAYAGTALICPEIRGLMRGIDWADSFCTTPSKLIIAVCDVCCLWVRDRHKLQHASLENHPDLPFKGLPTSQRVGALKIWFMIRSFGVENLQNQIREHIRLGQVMTKILQKDLRFEVCNKVVMGLICFRAKSNDMFNKALLYRCNETGNVSLASCVLQNKFVIRMCINSPKCSEEDLDSAYKLICNEYDILKPFQYRIEVMNQAELETFIRDPAKIHSSAEVSRRFPVVNPLEPCRSLAQISSQMHTAEYADPPGKSNKSPQVAAKGELPSAAPPSSRTPNSDISEKSDR.

The disordered stretch occupies residues 250–296; the sequence is YLNPIIKTPPHNERVPKMKTNISKTRKKKGKVSDASKDSRPSETKKE. Residues 280-296 are compositionally biased toward basic and acidic residues; sequence KVSDASKDSRPSETKKE. Thr492 and Ser591 together coordinate pyridoxal 5'-phosphate. An N6-(pyridoxal phosphate)lysine modification is found at Lys648. The segment at 861–905 is disordered; the sequence is HTAEYADPPGKSNKSPQVAAKGELPSAAPPSSRTPNSDISEKSDR. The segment covering 889-898 has biased composition (polar residues); that stretch reads PPSSRTPNSD.

It belongs to the group II decarboxylase family. As to quaternary structure, homodimer. Pyridoxal 5'-phosphate is required as a cofactor.

It catalyses the reaction L-dopa + H(+) = dopamine + CO2. It carries out the reaction 5-hydroxy-L-tryptophan + H(+) = serotonin + CO2. The protein operates within catecholamine biosynthesis; dopamine biosynthesis; dopamine from L-tyrosine: step 2/2. Its function is as follows. Catalyzes the decarboxylation of L-3,4-dihydroxyphenylalanine (DOPA) to dopamine, L-5-hydroxytryptophan to serotonin and L-tryptophan to tryptamine. The sequence is that of Probable aromatic-L-amino-acid decarboxylase (hdl-1) from Caenorhabditis elegans.